The following is a 426-amino-acid chain: Zinc finger protein 662 (426 aa).

The 44-residue stretch at 1–44 folds into the KRAB domain; it reads MLENYGAVASLAAFPFPKPALISQLERGETPWCSVPRGALDGEA. 8 consecutive C2H2-type zinc fingers follow at residues 192–214, 220–242, 248–270, 276–298, 304–326, 332–354, 360–382, and 388–410; these read YICE…QKTH, YGCK…QRIH, YECQ…QRIH, FECK…QRIH, YTCK…QRMH, YECK…QRVH, HECT…QRIH, and YKCN…QRRH.

Belongs to the krueppel C2H2-type zinc-finger protein family.

The protein resides in the nucleus. Functionally, may be involved in transcriptional regulation. The protein is Zinc finger protein 662 (ZNF662) of Homo sapiens (Human).